The chain runs to 405 residues: Nicotinate phosphoribosyltransferase (405 aa).

At His224 the chain carries Phosphohistidine; by autocatalysis.

The protein belongs to the NAPRTase family. Transiently phosphorylated on a His residue during the reaction cycle. Phosphorylation strongly increases the affinity for substrates and increases the rate of nicotinate D-ribonucleotide production. Dephosphorylation regenerates the low-affinity form of the enzyme, leading to product release.

It catalyses the reaction nicotinate + 5-phospho-alpha-D-ribose 1-diphosphate + ATP + H2O = nicotinate beta-D-ribonucleotide + ADP + phosphate + diphosphate. It participates in cofactor biosynthesis; NAD(+) biosynthesis; nicotinate D-ribonucleotide from nicotinate: step 1/1. In terms of biological role, catalyzes the synthesis of beta-nicotinate D-ribonucleotide from nicotinate and 5-phospho-D-ribose 1-phosphate at the expense of ATP. The polypeptide is Nicotinate phosphoribosyltransferase (Methanococcoides burtonii (strain DSM 6242 / NBRC 107633 / OCM 468 / ACE-M)).